Reading from the N-terminus, the 480-residue chain is Acetyl-coenzyme A carboxylase carboxyl transferase subunit beta, chloroplastic (480 aa).

The region spanning 212–480 is the CoA carboxyltransferase N-terminal domain; sequence LWVQCENCYG…FPLNQINKYK (269 aa). 4 residues coordinate Zn(2+): C216, C219, C235, and C238. The C4-type zinc finger occupies 216-238; it reads CENCYGLNYQKFFRSKMNICERC.

Belongs to the AccD/PCCB family. In terms of assembly, acetyl-CoA carboxylase is a heterohexamer composed of biotin carboxyl carrier protein, biotin carboxylase and 2 subunits each of ACCase subunit alpha and ACCase plastid-coded subunit beta (accD). Zn(2+) is required as a cofactor.

Its subcellular location is the plastid. The protein localises to the chloroplast stroma. The catalysed reaction is N(6)-carboxybiotinyl-L-lysyl-[protein] + acetyl-CoA = N(6)-biotinyl-L-lysyl-[protein] + malonyl-CoA. It participates in lipid metabolism; malonyl-CoA biosynthesis; malonyl-CoA from acetyl-CoA: step 1/1. Its function is as follows. Component of the acetyl coenzyme A carboxylase (ACC) complex. Biotin carboxylase (BC) catalyzes the carboxylation of biotin on its carrier protein (BCCP) and then the CO(2) group is transferred by the transcarboxylase to acetyl-CoA to form malonyl-CoA. In Illicium oligandrum (Star anise), this protein is Acetyl-coenzyme A carboxylase carboxyl transferase subunit beta, chloroplastic.